Consider the following 352-residue polypeptide: Photosystem II protein D1 (352 aa).

At Thr2 the chain carries N-acetylthreonine. A Phosphothreonine modification is found at Thr2. A run of 3 helical transmembrane segments spans residues 29–46 (YIGW…TATS), 118–133 (HFFL…EWEL), and 142–156 (WIAV…AATA). His118 contacts chlorophyll a. Residue Tyr126 participates in pheophytin a binding. Asp170 and Glu189 together coordinate [CaMn4O5] cluster. The chain crosses the membrane as a helical span at residues 197–218 (FHMLGVAGVFGGSLFSAMHGSL). His198 is a chlorophyll a binding site. A quinone-binding positions include His215 and 264–265 (SF). His215 is a binding site for Fe cation. Residue His272 participates in Fe cation binding. A helical transmembrane segment spans residues 274-288 (FLAAWPVVGIWFTAL). [CaMn4O5] cluster-binding residues include His332, Glu333, Asp342, and Ala344. Positions 345–352 (SVEAPSIA) are excised as a propeptide.

The protein belongs to the reaction center PufL/M/PsbA/D family. In terms of assembly, PSII is composed of 1 copy each of membrane proteins PsbA, PsbB, PsbC, PsbD, PsbE, PsbF, PsbH, PsbI, PsbJ, PsbK, PsbL, PsbM, PsbT, PsbX, PsbY, PsbZ, Psb30/Ycf12, at least 3 peripheral proteins of the oxygen-evolving complex and a large number of cofactors. It forms dimeric complexes. The cofactor is The D1/D2 heterodimer binds P680, chlorophylls that are the primary electron donor of PSII, and subsequent electron acceptors. It shares a non-heme iron and each subunit binds pheophytin, quinone, additional chlorophylls, carotenoids and lipids. D1 provides most of the ligands for the Mn4-Ca-O5 cluster of the oxygen-evolving complex (OEC). There is also a Cl(-1) ion associated with D1 and D2, which is required for oxygen evolution. The PSII complex binds additional chlorophylls, carotenoids and specific lipids.. Tyr-161 forms a radical intermediate that is referred to as redox-active TyrZ, YZ or Y-Z. Post-translationally, C-terminally processed by CTPA; processing is essential to allow assembly of the oxygen-evolving complex and thus photosynthetic growth.

Its subcellular location is the plastid. It localises to the chloroplast thylakoid membrane. The catalysed reaction is 2 a plastoquinone + 4 hnu + 2 H2O = 2 a plastoquinol + O2. Functionally, photosystem II (PSII) is a light-driven water:plastoquinone oxidoreductase that uses light energy to abstract electrons from H(2)O, generating O(2) and a proton gradient subsequently used for ATP formation. It consists of a core antenna complex that captures photons, and an electron transfer chain that converts photonic excitation into a charge separation. The D1/D2 (PsbA/PsbD) reaction center heterodimer binds P680, the primary electron donor of PSII as well as several subsequent electron acceptors. The polypeptide is Photosystem II protein D1 (Chlorella ellipsoidea).